Consider the following 149-residue polypeptide: MSGASARDATLLAFDYGEKRIGVAIGNALTRSARALVVIQNLNREHRFKAVGDLLAEWRPDALVVGLPMHPDGTPHDMTQQAKRFGNQLNGRFGLPVTWVDERYSSVEAEAGLRERNVRGRARTDMLDAEAARVILQQYLDQLSDHEHH.

Belongs to the YqgF nuclease family.

Its subcellular location is the cytoplasm. Functionally, could be a nuclease involved in processing of the 5'-end of pre-16S rRNA. The chain is Putative pre-16S rRNA nuclease from Burkholderia orbicola (strain MC0-3).